Consider the following 293-residue polypeptide: Methylsterol monooxygenase 1 (293 aa).

Transmembrane regions (helical) follow at residues 55 to 75 (LIVH…FQFI) and 100 to 120 (KILF…YYFT). The region spanning 144-274 (GCAVIEDTWH…FTWWDKLFGT (131 aa)) is the Fatty acid hydroxylase domain. The short motif at 157 to 161 (HRLLH) is the Histidine box-1 element. The short motif at 170-174 (HKVHH) is the Histidine box-2 element. A helical membrane pass occupies residues 199 to 219 (FFIGIVLLCDHVILLWAWVTI). A Histidine box-3 motif is present at residues 249-255 (HHDFHHM).

The protein belongs to the sterol desaturase family. The cofactor is Fe cation. Ubiquitinated by MARCHF6, leading to proteasomal degradation.

The protein localises to the endoplasmic reticulum membrane. The catalysed reaction is 4,4-dimethyl-5alpha-cholest-7-en-3beta-ol + 6 Fe(II)-[cytochrome b5] + 3 O2 + 5 H(+) = 4alpha-carboxy-4beta-methyl-5alpha-cholest-7-ene-3beta-ol + 6 Fe(III)-[cytochrome b5] + 4 H2O. The enzyme catalyses 4,4-dimethyl-5alpha-cholesta-8,24-dien-3beta-ol + 6 Fe(II)-[cytochrome b5] + 3 O2 + 5 H(+) = 4beta-methylzymosterol-4alpha-carboxylate + 6 Fe(III)-[cytochrome b5] + 4 H2O. It catalyses the reaction 4alpha-methylzymosterol + 6 Fe(II)-[cytochrome b5] + 3 O2 + 5 H(+) = 4alpha-carboxyzymosterol + 6 Fe(III)-[cytochrome b5] + 4 H2O. It carries out the reaction 4alpha-methyl-5alpha-cholest-7-en-3beta-ol + 6 Fe(II)-[cytochrome b5] + 3 O2 + 5 H(+) = 4alpha-carboxy-5alpha-cholest-7-en-3beta-ol + 6 Fe(III)-[cytochrome b5] + 4 H2O. The catalysed reaction is 4,4-dimethyl-5alpha-cholest-8-en-3beta-ol + 6 Fe(II)-[cytochrome b5] + 3 O2 + 5 H(+) = 4alpha-carboxy-4beta-methyl-5alpha-cholest-8-en-3beta-ol + 6 Fe(III)-[cytochrome b5] + 4 H2O. The enzyme catalyses 4alpha-methyl-5alpha-cholest-8-en-3beta-ol + 6 Fe(II)-[cytochrome b5] + 3 O2 + 5 H(+) = 4alpha-carboxy-5alpha-cholest-8-ene-3beta-ol + 6 Fe(III)-[cytochrome b5] + 4 H2O. The protein operates within steroid biosynthesis; zymosterol biosynthesis; zymosterol from lanosterol: step 3/6. Its pathway is steroid biosynthesis; cholesterol biosynthesis. Its function is as follows. Catalyzes the three-step monooxygenation required for the demethylation of 4,4-dimethyl and 4alpha-methylsterols, which can be subsequently metabolized to cholesterol. The protein is Methylsterol monooxygenase 1 (Msmo1) of Mus musculus (Mouse).